We begin with the raw amino-acid sequence, 128 residues long: Anion exchange transporter (128 aa).

At 1 to 14 (LFSFKELNEQFKRK) the chain is on the extracellular side. A helical membrane pass occupies residues 15-35 (IKVVLPVDLVLIIAASFACYC). Topologically, residues 36-66 (TNMENTYGLEVVGHIPRGIPPPRAPPMNILS) are cytoplasmic. The chain crosses the membrane as a helical span at residues 67-87 (AVITEAFGVALVGYAASLALA). Residues 88–103 (QGSAKKFKYSVDDNQE) are Extracellular-facing. Residues 104-124 (FLAHGLSNVISSFLFCIPSAA) form a helical membrane-spanning segment. The Cytoplasmic segment spans residues 125–128 (AMGR).

This sequence belongs to the SLC26A/SulP transporter (TC 2.A.53) family. As to expression, expressed in gastric epithelium, predominantly in the gastric parietal cells but also at lower levels in mucosal cells.

Its subcellular location is the basolateral cell membrane. It localises to the recycling endosome membrane. The protein resides in the apical cell membrane. It is found in the lateral cell membrane. It carries out the reaction chloride(in) = chloride(out). The enzyme catalyses iodide(out) = iodide(in). The catalysed reaction is bromide(in) = bromide(out). It catalyses the reaction oxalate(in) = oxalate(out). It carries out the reaction nitrate(in) = nitrate(out). The enzyme catalyses sulfate(in) = sulfate(out). The catalysed reaction is D-gluconate(in) = D-gluconate(out). It catalyses the reaction thiocyanate(in) = thiocyanate(out). It carries out the reaction hydrogencarbonate(in) = hydrogencarbonate(out). The enzyme catalyses hydrogencarbonate(in) + chloride(out) = hydrogencarbonate(out) + chloride(in). Functionally, acts as an anion channel mediating the transport of chloride, bromide, iodide, nitrate, sulfate, gluconate, thiocyanate, oxalate and bicarbonate ions. Its permeability towards bicarbonate is weak and increases when pH is above 7. Mediates thiocyanate transport in retinal pigment epithelium cells. Mediates iodide transport in the thyroid gland, playing an important role in the synthesis of thyroid hormones and the maintenance of thyroid function. The sequence is that of Anion exchange transporter from Oryctolagus cuniculus (Rabbit).